Here is a 596-residue protein sequence, read N- to C-terminus: Elongation factor 4 (596 aa).

The tr-type G domain occupies 2-183 (KNIRNFSIIA…AIVRRVPAPD (182 aa)). GTP is bound by residues 14-19 (DHGKST) and 130-133 (NKID).

Belongs to the TRAFAC class translation factor GTPase superfamily. Classic translation factor GTPase family. LepA subfamily.

It is found in the cell inner membrane. It catalyses the reaction GTP + H2O = GDP + phosphate + H(+). In terms of biological role, required for accurate and efficient protein synthesis under certain stress conditions. May act as a fidelity factor of the translation reaction, by catalyzing a one-codon backward translocation of tRNAs on improperly translocated ribosomes. Back-translocation proceeds from a post-translocation (POST) complex to a pre-translocation (PRE) complex, thus giving elongation factor G a second chance to translocate the tRNAs correctly. Binds to ribosomes in a GTP-dependent manner. The protein is Elongation factor 4 of Campylobacter curvus (strain 525.92).